A 164-amino-acid chain; its full sequence is FMN reductase (NADH) RutF (164 aa).

This sequence belongs to the non-flavoprotein flavin reductase family. RutF subfamily.

It carries out the reaction FMNH2 + NAD(+) = FMN + NADH + 2 H(+). Its function is as follows. Catalyzes the reduction of FMN to FMNH2 which is used to reduce pyrimidine by RutA via the Rut pathway. This is FMN reductase (NADH) RutF from Escherichia coli O81 (strain ED1a).